Consider the following 415-residue polypeptide: Vascular endothelial growth factor C (415 aa).

The N-terminal stretch at 1 to 31 is a signal peptide; it reads MHLLCFLSLACSLLAAALIPGPREAPATVAA. Positions 32-107 are excised as a propeptide; that stretch reads FESGLGFSEA…RTGDTVKLAA (76 aa). 3 disulfides stabilise this stretch: Cys127-Cys169, Cys158-Cys205, and Cys162-Cys207. N-linked (GlcNAc...) asparagine glycans are attached at residues Asn171, Asn201, and Asn236. Positions 224–415 are excised as a propeptide; sequence SLPATLPQCQ…PSYWKRPHLN (192 aa). Tandem repeats lie at residues 276–291, 300–315, 324–339, and 343–358. The tract at residues 276-358 is 4 X 16 AA repeats of C-X(10)-C-X-C-X(1,3)-C; it reads CGPNKELDED…LNPGKCACEC (83 aa).

The protein belongs to the PDGF/VEGF growth factor family. As to quaternary structure, homodimer; non-covalent and antiparallel. Interacts with FLT4/VEGFR3; the interaction is required for FLT4/VEGFR3 homodimarization and activation. Undergoes a complex proteolytic maturation which generates a variety of processed secreted forms with increased activity toward VEGFR-3, but only the fully processed form could activate VEGFR-2. VEGF-C first form an antiparallel homodimer linked by disulfide bonds. Before secretion, a cleavage occurs between Arg-223 and Ser-224 producing a heterotetramer. The next extracellular step of the processing removes the N-terminal propeptide. Finally the mature VEGF-C is composed mostly of two VEGF homology domains (VHDs) bound by non-covalent interactions. As to expression, highly expressed in the lung, ovary, preputial gland and the adrenal gland. Expressed in the post-pubertal mammary glands.

It localises to the secreted. Functionally, growth factor active in angiogenesis, and endothelial cell growth, stimulating their proliferation and migration and also has effects on the permeability of blood vessels. May function in angiogenesis of the venous and lymphatic vascular systems during embryogenesis, and also in the maintenance of differentiated lymphatic endothelium in adults. Binds and activates KDR/VEGFR2 and FLT4/VEGFR3 receptors. The polypeptide is Vascular endothelial growth factor C (Vegfc) (Rattus norvegicus (Rat)).